The following is a 400-amino-acid chain: MRKLTILGATGSIGSSTLSVAQQNSDQFEIVALGAGTNVDKMLELCLEWKPKYVAMATQPAADALKELLSAHAINAEVFSGEDGLCHIAQLDEVDTVMAAIVGAAGLLPTMSAVKASKRILLANKEALVMSGQLFIDAVEKYGAELLPVDSEHNAIFQCLPQSIQTNLGRCDLEEHGVSSILLTGSGGPFRYTDVSELEAVTPEMAIAHPNWSMGPKISVDSATMMNKGLEYIEARWLFNASKEQLKVVIHPQSVIHSMVQYKDGSVLAQMGLPDMRTPIACTMSYPKRVNAGVEPLDFTKVGEFTFIAPDFSRYPCLKLAIDACYLGQHATTGLNAANEQAVAAFLANKIKFTDIARINEAVLHKVCANFQNLELDSLESLIDLDRMARRYADEAINKV.

Positions 10, 11, 12, 13, 36, 38, and 124 each coordinate NADPH. Lys125 is a binding site for 1-deoxy-D-xylulose 5-phosphate. Residue Glu126 coordinates NADPH. Residue Asp150 coordinates Mn(2+). 4 residues coordinate 1-deoxy-D-xylulose 5-phosphate: Ser151, Glu152, Ser186, and His209. Glu152 is a binding site for Mn(2+). Gly215 serves as a coordination point for NADPH. 1-deoxy-D-xylulose 5-phosphate is bound by residues Ser222, Asn227, Lys228, and Glu231. Glu231 contacts Mn(2+).

Belongs to the DXR family. Requires Mg(2+) as cofactor. It depends on Mn(2+) as a cofactor.

The catalysed reaction is 2-C-methyl-D-erythritol 4-phosphate + NADP(+) = 1-deoxy-D-xylulose 5-phosphate + NADPH + H(+). The protein operates within isoprenoid biosynthesis; isopentenyl diphosphate biosynthesis via DXP pathway; isopentenyl diphosphate from 1-deoxy-D-xylulose 5-phosphate: step 1/6. Its function is as follows. Catalyzes the NADPH-dependent rearrangement and reduction of 1-deoxy-D-xylulose-5-phosphate (DXP) to 2-C-methyl-D-erythritol 4-phosphate (MEP). This Aliivibrio fischeri (strain MJ11) (Vibrio fischeri) protein is 1-deoxy-D-xylulose 5-phosphate reductoisomerase.